Here is a 134-residue protein sequence, read N- to C-terminus: D-ribose pyranase (134 aa).

Histidine 20 functions as the Proton donor in the catalytic mechanism. Substrate is bound by residues aspartate 28, histidine 101, and 123-125 (YSN).

It belongs to the RbsD / FucU family. RbsD subfamily. As to quaternary structure, homodecamer.

The protein localises to the cytoplasm. The enzyme catalyses beta-D-ribopyranose = beta-D-ribofuranose. The protein operates within carbohydrate metabolism; D-ribose degradation; D-ribose 5-phosphate from beta-D-ribopyranose: step 1/2. Its function is as follows. Catalyzes the interconversion of beta-pyran and beta-furan forms of D-ribose. The chain is D-ribose pyranase from Pseudomonas syringae pv. tomato (strain ATCC BAA-871 / DC3000).